A 477-amino-acid polypeptide reads, in one-letter code: Proline--tRNA ligase (477 aa).

The protein belongs to the class-II aminoacyl-tRNA synthetase family. ProS type 3 subfamily. Homodimer.

It is found in the cytoplasm. The enzyme catalyses tRNA(Pro) + L-proline + ATP = L-prolyl-tRNA(Pro) + AMP + diphosphate. In terms of biological role, catalyzes the attachment of proline to tRNA(Pro) in a two-step reaction: proline is first activated by ATP to form Pro-AMP and then transferred to the acceptor end of tRNA(Pro). The polypeptide is Proline--tRNA ligase (Methanoculleus marisnigri (strain ATCC 35101 / DSM 1498 / JR1)).